We begin with the raw amino-acid sequence, 247 residues long: MDLMMALKRVCRVLLFVTQMYVFSGRGSLSFEYSQPVAQPLKDTFPSSTTATSIKATTTKMPEYMEICPSNGQCSRLASDCMTCATNYSCIYGKLVTFNCTAKNGVVCFDENSQRQEYFTISMACQFCWQLPPSDYVCNLSSSCKTISCPRQRYNTTCTVLDHVHCLGNRTFPKMLYCNWTGGYKWSTALALSITLGGFGADRFYLGQWREGLGKLFSFGGLGIWTLIDVFLISVGYVGPADGSLYI.

The signal sequence occupies residues 1–30 (MDLMMALKRVCRVLLFVTQMYVFSGRGSLS). Residues 31 to 179 (FEYSQPVAQP…RTFPKMLYCN (149 aa)) lie on the Extracellular side of the membrane. Asparagine 87, asparagine 99, asparagine 139, asparagine 155, asparagine 169, and asparagine 179 each carry an N-linked (GlcNAc...) asparagine glycan. A helical transmembrane segment spans residues 180 to 200 (WTGGYKWSTALALSITLGGFG). A TM2 domain is found at 183-231 (GYKWSTALALSITLGGFGADRFYLGQWREGLGKLFSFGGLGIWTLIDVF). The Cytoplasmic portion of the chain corresponds to 201–215 (ADRFYLGQWREGLGK). Residues 216 to 236 (LFSFGGLGIWTLIDVFLISVG) form a helical membrane-spanning segment. Residues 237–247 (YVGPADGSLYI) lie on the Extracellular side of the membrane.

This sequence belongs to the TM2 family.

The protein localises to the membrane. The protein is TM2 domain-containing protein 3 (tm2d3) of Xenopus laevis (African clawed frog).